A 429-amino-acid chain; its full sequence is Ribosomal RNA small subunit methyltransferase B (429 aa).

S-adenosyl-L-methionine is bound by residues 254-260 (CAAPGGK), Asp277, Asp303, and Asp322. Residue Cys375 is the Nucleophile of the active site.

It belongs to the class I-like SAM-binding methyltransferase superfamily. RsmB/NOP family.

It localises to the cytoplasm. It catalyses the reaction cytidine(967) in 16S rRNA + S-adenosyl-L-methionine = 5-methylcytidine(967) in 16S rRNA + S-adenosyl-L-homocysteine + H(+). Functionally, specifically methylates the cytosine at position 967 (m5C967) of 16S rRNA. The sequence is that of Ribosomal RNA small subunit methyltransferase B from Escherichia coli O7:K1 (strain IAI39 / ExPEC).